Consider the following 124-residue polypeptide: MIQPQTRLKVADNTGAKEIMCIRVLGGSKRKFGNIGDVIVASVKSATPGGVVKKGEVVKAVIVRTKRGVRRADGSYIKFDENAAVVIKDDKQPRGTRIFGPIARELREKDKEFNKILSLAPEVL.

The protein belongs to the universal ribosomal protein uL14 family. In terms of assembly, part of the 50S ribosomal subunit. Forms a cluster with proteins L3 and L19. In the 70S ribosome, L14 and L19 interact and together make contacts with the 16S rRNA in bridges B5 and B8.

Functionally, binds to 23S rRNA. Forms part of two intersubunit bridges in the 70S ribosome. The protein is Large ribosomal subunit protein uL14 of Clostridium novyi (strain NT).